The primary structure comprises 351 residues: Peptide chain release factor 1 (351 aa).

Gln-230 carries the post-translational modification N5-methylglutamine.

Belongs to the prokaryotic/mitochondrial release factor family. In terms of processing, methylated by PrmC. Methylation increases the termination efficiency of RF1.

The protein localises to the cytoplasm. Functionally, peptide chain release factor 1 directs the termination of translation in response to the peptide chain termination codons UAG and UAA. This is Peptide chain release factor 1 from Onion yellows phytoplasma (strain OY-M).